The sequence spans 206 residues: Ribosomal RNA large subunit methyltransferase E (206 aa).

S-adenosyl-L-methionine contacts are provided by glycine 55, tryptophan 57, aspartate 75, aspartate 91, and aspartate 116. The active-site Proton acceptor is lysine 156.

The protein belongs to the class I-like SAM-binding methyltransferase superfamily. RNA methyltransferase RlmE family.

The protein localises to the cytoplasm. The catalysed reaction is uridine(2552) in 23S rRNA + S-adenosyl-L-methionine = 2'-O-methyluridine(2552) in 23S rRNA + S-adenosyl-L-homocysteine + H(+). Its function is as follows. Specifically methylates the uridine in position 2552 of 23S rRNA at the 2'-O position of the ribose in the fully assembled 50S ribosomal subunit. This chain is Ribosomal RNA large subunit methyltransferase E, found in Blochmanniella floridana.